Consider the following 304-residue polypeptide: Ribosomal RNA small subunit methyltransferase H (304 aa).

S-adenosyl-L-methionine is bound by residues 37–39 (GGH), D57, F79, D100, and H107.

It belongs to the methyltransferase superfamily. RsmH family.

The protein resides in the cytoplasm. The enzyme catalyses cytidine(1402) in 16S rRNA + S-adenosyl-L-methionine = N(4)-methylcytidine(1402) in 16S rRNA + S-adenosyl-L-homocysteine + H(+). Specifically methylates the N4 position of cytidine in position 1402 (C1402) of 16S rRNA. In Phocaeicola vulgatus (strain ATCC 8482 / DSM 1447 / JCM 5826 / CCUG 4940 / NBRC 14291 / NCTC 11154) (Bacteroides vulgatus), this protein is Ribosomal RNA small subunit methyltransferase H.